Consider the following 529-residue polypeptide: DNA polymerase lambda (529 aa).

In terms of domain architecture, BRCT spans 14-109; sequence DPEGMFAGMV…EKANEDLYVL (96 aa). The interval 119–199 is disordered; sequence PKKSLPAISG…ESTSVYKPPD (81 aa). The span at 153-175 shows a compositional bias: polar residues; sequence SHSNTQGSPDSPTSCSVPSTSAS. Positions 182–193 are enriched in low complexity; the sequence is ETPTSPQSESTS. Residues 213–227 are DNA-binding; that stretch reads NIYRALGEDRRSFSY. H260 is an active-site residue. Residues 295-298 are DNA-binding; the sequence is GPAT. DCTP contacts are provided by residues R336, 367-370, and 376-379; these read SYRR and GDLD. An involved in primer binding region spans residues 370–379; that stretch reads RGKATCGDLD. Residues D377, D379, and D444 each coordinate Mn(2+). Positions 418–459 are DNA-binding; it reads EEGTDSGVDTYFGLCTYPGQELRRRIDFKVYPRDIYSFGLIA. Residue N467 coordinates dCTP.

It belongs to the DNA polymerase type-X family. In terms of assembly, interacts with the DNA repair proteins XRCC4 and LIG4. Interacts with HSP90-1. Requires Mn(2+) as cofactor.

The protein localises to the nucleus. The enzyme catalyses DNA(n) + a 2'-deoxyribonucleoside 5'-triphosphate = DNA(n+1) + diphosphate. In terms of biological role, repair polymerase involved in base excision repair (BER) and responsible for repair of lesions that give rise to abasic (AP) sites in DNA. Has both DNA polymerase and terminal transferase activities. Has a 5'-deoxyribose-5-phosphate lyase (dRP lyase) activity. Involved in the repair of transposon-induced DNA double strand breaks (DSBs). Involved in repair of UV-B-mediated DNA damage during seedling development through an excision repair mechanism. Involved the repair of DSBs induced by high salinity and DNA cross-linking agent. Functions via the DNA non-homologous end joining (NHEJ) pathway. The protein is DNA polymerase lambda of Arabidopsis thaliana (Mouse-ear cress).